The primary structure comprises 285 residues: 4-diphosphocytidyl-2-C-methyl-D-erythritol kinase (285 aa).

Residue Lys12 is part of the active site. ATP is bound at residue 95 to 105 (PVGAGLAGGST). Asp137 is an active-site residue.

Belongs to the GHMP kinase family. IspE subfamily.

The enzyme catalyses 4-CDP-2-C-methyl-D-erythritol + ATP = 4-CDP-2-C-methyl-D-erythritol 2-phosphate + ADP + H(+). The protein operates within isoprenoid biosynthesis; isopentenyl diphosphate biosynthesis via DXP pathway; isopentenyl diphosphate from 1-deoxy-D-xylulose 5-phosphate: step 3/6. Functionally, catalyzes the phosphorylation of the position 2 hydroxy group of 4-diphosphocytidyl-2C-methyl-D-erythritol. In Syntrophomonas wolfei subsp. wolfei (strain DSM 2245B / Goettingen), this protein is 4-diphosphocytidyl-2-C-methyl-D-erythritol kinase.